Here is a 350-residue protein sequence, read N- to C-terminus: Nicotinate-nucleotide--dimethylbenzimidazole phosphoribosyltransferase (350 aa).

Residue Glu-317 is the Proton acceptor of the active site.

The protein belongs to the CobT family.

The enzyme catalyses 5,6-dimethylbenzimidazole + nicotinate beta-D-ribonucleotide = alpha-ribazole 5'-phosphate + nicotinate + H(+). The protein operates within nucleoside biosynthesis; alpha-ribazole biosynthesis; alpha-ribazole from 5,6-dimethylbenzimidazole: step 1/2. Its function is as follows. Catalyzes the synthesis of alpha-ribazole-5'-phosphate from nicotinate mononucleotide (NAMN) and 5,6-dimethylbenzimidazole (DMB). In Shewanella oneidensis (strain ATCC 700550 / JCM 31522 / CIP 106686 / LMG 19005 / NCIMB 14063 / MR-1), this protein is Nicotinate-nucleotide--dimethylbenzimidazole phosphoribosyltransferase.